The following is a 123-amino-acid chain: Large ribosomal subunit protein uL29 (123 aa).

This sequence belongs to the universal ribosomal protein uL29 family.

The chain is Large ribosomal subunit protein uL29 (RPL35) from Theileria lestoquardi.